The chain runs to 131 residues: Fluoride-specific ion channel FluC (131 aa).

4 helical membrane-spanning segments follow: residues 10-30, 36-56, 71-91, and 99-119; these read AAVA…SGLV, FPMG…FLTW, LATV…YETV, and VLSI…VLGG. Na(+) is bound by residues Gly78 and Thr81.

The protein belongs to the fluoride channel Fluc/FEX (TC 1.A.43) family.

Its subcellular location is the cell membrane. The catalysed reaction is fluoride(in) = fluoride(out). Na(+) is not transported, but it plays an essential structural role and its presence is essential for fluoride channel function. Its function is as follows. Fluoride-specific ion channel. Important for reducing fluoride concentration in the cell, thus reducing its toxicity. The chain is Fluoride-specific ion channel FluC from Methanopyrus kandleri (strain AV19 / DSM 6324 / JCM 9639 / NBRC 100938).